Here is a 249-residue protein sequence, read N- to C-terminus: 2,3-bisphosphoglycerate-dependent phosphoglycerate mutase (249 aa).

Substrate-binding positions include 9-16 (RHGQSQWN), 22-23 (TG), arginine 61, 88-91 (ERHY), lysine 99, 115-116 (RR), and 184-185 (GN). The active-site Tele-phosphohistidine intermediate is histidine 10. Residue glutamate 88 is the Proton donor/acceptor of the active site.

It belongs to the phosphoglycerate mutase family. BPG-dependent PGAM subfamily. In terms of assembly, homodimer.

It catalyses the reaction (2R)-2-phosphoglycerate = (2R)-3-phosphoglycerate. It functions in the pathway carbohydrate degradation; glycolysis; pyruvate from D-glyceraldehyde 3-phosphate: step 3/5. Catalyzes the interconversion of 2-phosphoglycerate and 3-phosphoglycerate. In Xanthomonas axonopodis pv. citri (strain 306), this protein is 2,3-bisphosphoglycerate-dependent phosphoglycerate mutase.